Reading from the N-terminus, the 275-residue chain is NH(3)-dependent NAD(+) synthetase (275 aa).

Residue 46–53 (GISGGQDS) participates in ATP binding. Mg(2+) is bound at residue aspartate 52. Arginine 140 contacts deamido-NAD(+). ATP is bound at residue threonine 160. Residue glutamate 165 participates in Mg(2+) binding. The deamido-NAD(+) site is built by lysine 173 and aspartate 180. Lysine 189 and threonine 211 together coordinate ATP. Residue 260–261 (HK) participates in deamido-NAD(+) binding.

The protein belongs to the NAD synthetase family. In terms of assembly, homodimer.

It catalyses the reaction deamido-NAD(+) + NH4(+) + ATP = AMP + diphosphate + NAD(+) + H(+). It participates in cofactor biosynthesis; NAD(+) biosynthesis; NAD(+) from deamido-NAD(+) (ammonia route): step 1/1. Its function is as follows. Catalyzes the ATP-dependent amidation of deamido-NAD to form NAD. Uses ammonia as a nitrogen source. This Escherichia coli O8 (strain IAI1) protein is NH(3)-dependent NAD(+) synthetase.